A 549-amino-acid chain; its full sequence is Cytochrome bc1 complex cytochrome b subunit (549 aa).

A helical membrane pass occupies residues 45–65 (FLLGEIALYSFVVLLITGVYL). Heme contacts are provided by His-114 and His-128. 3 helical membrane passes run 118–138 (ALMF…TGAF), 146–166 (WVIG…GYSL), and 189–209 (VIGT…TILI). Residues His-216 and His-231 each contribute to the heme site. A run of 5 helical transmembrane segments spans residues 217–237 (ILLL…LVWF), 266–286 (SGAF…LLQI), 335–355 (PVWV…YPFL), 381–401 (IGAM…NDII), and 418–438 (IGMV…CIGL).

It belongs to the cytochrome b family. In terms of assembly, the cytochrome bc1 complex is composed of a cytochrome b (QcrB), the Rieske iron-sulfur protein (QcrA) and a diheme cytochrome c (QcrC) subunit. Heme is required as a cofactor.

Its subcellular location is the cell membrane. It carries out the reaction a quinol + 2 Fe(III)-[cytochrome c](out) = a quinone + 2 Fe(II)-[cytochrome c](out) + 2 H(+)(out). Cytochrome b subunit of the cytochrome bc1 complex, an essential component of the respiratory electron transport chain required for ATP synthesis. The bc1 complex catalyzes the oxidation of ubiquinol and the reduction of cytochrome c in the respiratory chain. The bc1 complex operates through a Q-cycle mechanism that couples electron transfer to generation of the proton gradient that drives ATP synthesis. The cytochrome b subunit contains two ubiquinol reactive sites: the oxidation (QP) site and the reduction (QN) site. In Mycobacterium bovis (strain ATCC BAA-935 / AF2122/97), this protein is Cytochrome bc1 complex cytochrome b subunit (qcrB).